The chain runs to 318 residues: tRNA uridine(34) hydroxylase (318 aa).

Residues 125 to 219 (QDPNTVVIDA…YGTSKDTEGK (95 aa)) enclose the Rhodanese domain. Cys179 (cysteine persulfide intermediate) is an active-site residue.

The protein belongs to the TrhO family.

It carries out the reaction uridine(34) in tRNA + AH2 + O2 = 5-hydroxyuridine(34) in tRNA + A + H2O. Its function is as follows. Catalyzes oxygen-dependent 5-hydroxyuridine (ho5U) modification at position 34 in tRNAs. This is tRNA uridine(34) hydroxylase from Acholeplasma laidlawii (strain PG-8A).